The sequence spans 395 residues: Immediate-early protein ICP-46 (395 aa).

This sequence belongs to the IIV-6 393L family.

This Dryophytes versicolor (chameleon treefrog) protein is Immediate-early protein ICP-46 (ICR489).